A 431-amino-acid chain; its full sequence is Gamma conglutin 1 (431 aa).

An N-terminal signal peptide occupies residues 1–24 (MASFLHNFLLFFCSLSLIILTSSA). One can recognise a Peptidase A1 domain in the interval 51 to 407 (HVVQIHKRTP…DLMNSRLGFS (357 aa)). 5 cysteine pairs are disulfide-bonded: cysteine 79/cysteine 168, cysteine 93/cysteine 106, cysteine 98/cysteine 123, cysteine 109/cysteine 118, and cysteine 322/cysteine 369.

This sequence belongs to the peptidase A1 family. In terms of assembly, two-subunit monomeric unit made of alpha and beta subunits coupled by disulfide bonds (at pH 4.5 and under non-reducing conditions). Monomeric alpha and beta subunits in reducing conditions. Can also form oligomers including dimer, tetramer and cyclic hexamer (trimer of dimers) (at pH &gt; 5.5). Component of globulins complexes which accumulate in seeds. Interacts with flavonoids (e.g. apigenin glucosides) present in globulins complexes.

It localises to the secreted. The protein resides in the extracellular space. Sulfur-rich seed storage protein that remains undegraded at germination. This Prunus dulcis (Almond) protein is Gamma conglutin 1.